We begin with the raw amino-acid sequence, 221 residues long: MKRFLILTPMVLALCGCESPALLVQKDDAEFAPPANLIQPATVTEGGGLFQPANSWSLLQDRRAYRIGDILTVILDESTQSSKQAKTNFGKKNDMSLGVPEVLGKKLNKFGGSISGKRDFDGSATSAQQNMLRGSITVAVHQVLPNGVLVIRGEKWLTLNQGDEYMRVTGLVRADDVARDNSVSSQRIANARISYAGRGALSDANSAGWLTRFFNHPLFPI.

An N-terminal signal peptide occupies residues 1–16 (MKRFLILTPMVLALCG). Cys17 is lipidated: N-palmitoyl cysteine. The S-diacylglycerol cysteine moiety is linked to residue Cys17.

This sequence belongs to the FlgH family. In terms of assembly, the basal body constitutes a major portion of the flagellar organelle and consists of four rings (L,P,S, and M) mounted on a central rod.

The protein resides in the cell outer membrane. Its subcellular location is the bacterial flagellum basal body. Functionally, assembles around the rod to form the L-ring and probably protects the motor/basal body from shearing forces during rotation. The sequence is that of Flagellar L-ring protein 1 from Yersinia pestis.